The chain runs to 72 residues: Guanine nucleotide-binding protein G(I)/G(S)/G(O) subunit gamma-12 (72 aa).

Ser2 bears the N-acetylserine mark. A phosphoserine mark is found at Ser10 and Ser26. A Phosphotyrosine modification is found at Tyr42. Position 49 is a phosphoserine (Ser49). Cys69 is modified (cysteine methyl ester). Cys69 is lipidated: S-geranylgeranyl cysteine. Residues 70-72 (IIL) constitute a propeptide, removed in mature form.

The protein belongs to the G protein gamma family. G proteins are composed of 3 units, alpha, beta and gamma.

It localises to the cell membrane. In terms of biological role, guanine nucleotide-binding proteins (G proteins) are involved as a modulator or transducer in various transmembrane signaling systems. The beta and gamma chains are required for the GTPase activity, for replacement of GDP by GTP, and for G protein-effector interaction. In Mus musculus (Mouse), this protein is Guanine nucleotide-binding protein G(I)/G(S)/G(O) subunit gamma-12 (Gng12).